Consider the following 81-residue polypeptide: Apolipoprotein C-I, acidic form (81 aa).

Positions 1-24 are cleaved as a signal peptide; sequence MRLFLSLLVVVLSIVLEGPTPAQG.

This sequence belongs to the apolipoprotein C1 family.

The protein localises to the secreted. In Cercocebus atys (Sooty mangabey), this protein is Apolipoprotein C-I, acidic form (APOC1A).